Consider the following 306-residue polypeptide: Palmitoyl-protein thioesterase 1 (306 aa).

An N-terminal signal peptide occupies residues 1–27 (MASPSCLWLLAVALLPWTCAARALHHL). 3 disulfides stabilise this stretch: Cys-45/Cys-46, Cys-96/Cys-128, and Cys-152/Cys-160. Ser-115 is an active-site residue. N-linked (GlcNAc...) asparagine glycans are attached at residues Asn-197, Asn-212, and Asn-232. Catalysis depends on residues Asp-233 and His-289.

The protein belongs to the palmitoyl-protein thioesterase family. In terms of assembly, interacts with CLN5, ATP5F1A and ATP5F1B. Post-translationally, glycosylated.

The protein localises to the lysosome. The protein resides in the secreted. It localises to the golgi apparatus. Its subcellular location is the endoplasmic reticulum. It catalyses the reaction S-hexadecanoyl-L-cysteinyl-[protein] + H2O = L-cysteinyl-[protein] + hexadecanoate + H(+). It carries out the reaction hexadecanoyl-CoA + H2O = hexadecanoate + CoA + H(+). The enzyme catalyses S-hexadecanoyl-N-acetylcysteamine + H2O = N-acetylcysteamine + hexadecanoate + H(+). The catalysed reaction is S-hexadecanoyl-N-acetylcysteine methyl ester + H2O = N-acetylcysteine methyl ester + hexadecanoate + H(+). With respect to regulation, palmitoylation reduces PPT1 enzymatic activity. Its function is as follows. Has thioesterase activity against fatty acid thioesters with 14 -18 carbons, including palmitoyl-CoA, S-palmitoyl-N-acetylcysteamine, and palmitoylated proteins. In contrast to PPT2, PPT1 can hydrolyze palmitoylated proteins and palmitoylcysteine. This Macaca fascicularis (Crab-eating macaque) protein is Palmitoyl-protein thioesterase 1 (PPT1).